The sequence spans 254 residues: Pyruvate aldolase (254 aa).

Catalysis depends on H48, which acts as the Proton acceptor. E151 and D177 together coordinate a divalent metal cation.

This sequence belongs to the HpcH/HpaI aldolase family. A divalent metal cation serves as cofactor.

It catalyses the reaction D-glyceraldehyde + pyruvate = 2-dehydro-3-deoxy-L-galactonate. In terms of biological role, aldolase which can catalyze in vitro the aldolisation reaction between pyruvate (PA) and D-glyceraldehyde (D-GA) to form 2-dehydro-3-deoxy-L-galactonate. This chain is Pyruvate aldolase, found in Rhizobium etli (strain ATCC 51251 / DSM 11541 / JCM 21823 / NBRC 15573 / CFN 42).